The chain runs to 396 residues: Putative peptide chain release factor 1, mitochondrial (396 aa).

The residue at position 270 (Q270) is an N5-methylglutamine.

This sequence belongs to the prokaryotic/mitochondrial release factor family. Methylation of glutamine in the GGQ triplet is conserved from bacteria to mammals.

Its subcellular location is the mitochondrion. This is Putative peptide chain release factor 1, mitochondrial from Schizosaccharomyces pombe (strain 972 / ATCC 24843) (Fission yeast).